The following is a 570-amino-acid chain: 5-aminolevulinate synthase, mitochondrial (570 aa).

The N-terminal 53 residues, 1-53 (MESVIRSSAKICPFMHSATGSMQSVKALKNANLPAIAQQCPFMGKAMEQRRGY), are a transit peptide targeting the mitochondrion. Positions 119, 232, and 251 each coordinate substrate. Pyridoxal 5'-phosphate-binding residues include Ser284, His312, and Thr356. Residue Lys359 is part of the active site. N6-(pyridoxal phosphate)lysine is present on Lys359. Pyridoxal 5'-phosphate contacts are provided by Thr388 and Thr389. Position 474 (Thr474) interacts with substrate.

Belongs to the class-II pyridoxal-phosphate-dependent aminotransferase family. As to quaternary structure, homodimer. The cofactor is pyridoxal 5'-phosphate.

It localises to the mitochondrion matrix. It carries out the reaction succinyl-CoA + glycine + H(+) = 5-aminolevulinate + CO2 + CoA. Its pathway is porphyrin-containing compound metabolism; protoporphyrin-IX biosynthesis; 5-aminolevulinate from glycine: step 1/1. Functionally, catalyzes the synthesis of 5-aminolevulinate (ALA) from succinyl-CoA and glycine, the first and rate-limiting step in heme biosynthesis. This chain is 5-aminolevulinate synthase, mitochondrial (HEM1), found in Kluyveromyces lactis (strain ATCC 8585 / CBS 2359 / DSM 70799 / NBRC 1267 / NRRL Y-1140 / WM37) (Yeast).